The following is a 373-amino-acid chain: Peroxisomal biogenesis factor 3 (373 aa).

Topologically, residues Met-1–Lys-15 are cytoplasmic. The segment at Met-1–Ala-45 is targeting to peroxisomes. The helical transmembrane segment at Cys-16–Lys-36 threads the bilayer. The Peroxisomal segment spans residues Ile-37–Thr-116. A helical membrane pass occupies residues Val-117–Ile-140. Residues Tyr-120–Ile-136 are interaction with PEX19. Over Tyr-141 to Lys-373 the chain is Cytoplasmic.

Belongs to the peroxin-3 family. As to quaternary structure, interacts with PEX19. As to expression, found in all examined tissues.

It is found in the peroxisome membrane. Involved in peroxisome biosynthesis and integrity. Assembles membrane vesicles before the matrix proteins are translocated. As a docking factor for PEX19, is necessary for the import of peroxisomal membrane proteins in the peroxisomes. The sequence is that of Peroxisomal biogenesis factor 3 (PEX3) from Homo sapiens (Human).